Consider the following 854-residue polypeptide: SH2 domain-containing protein 3C (854 aa).

Ser22 bears the Phosphoserine mark. Residues Arg34 to Ser43 show a composition bias toward low complexity. Residues Arg34–Ala129 form a disordered region. Over residues Glu99–Gly124 the composition is skewed to basic and acidic residues. The region spanning Trp215 to Val314 is the SH2 domain. 2 positions are modified to phosphotyrosine: Tyr273 and Tyr278. 3 disordered regions span residues Ser330–Ser384, Leu398–Val417, and Ala422–Lys520. Residues Ser333–Gly347 show a composition bias toward low complexity. Ser354 is subject to Phosphoserine. 3 stretches are compositionally biased toward low complexity: residues Ser400–Ser415, Ala422–Pro436, and Ser474–Pro485. At Ser435 the chain carries Phosphoserine. The span at Thr508–Lys520 shows a compositional bias: basic and acidic residues. The region spanning Asp580–Ala848 is the Ras-GEF domain. Residue Tyr787 is modified to Phosphotyrosine.

Component of a complex comprised of SH2D3C, BCAR1/CAS, and CRK. Within the complex, interacts with CRK and (via C-terminus) with BCAR1/CAS (via C-terminus). Interacts with NEDD9/HEF1. Interacts with EPHB2. As to quaternary structure, interacts with NEDD9/HEF1. Interacts with BCAR1/CAS. Interacts with PTK2B. In terms of assembly, interacts (via C-terminus) with BCAR1/CAS (via C-terminus). Interacts with IGF1. Post-translationally, phosphorylated by MAPK/ERK upon T-cell receptor stimulation in T-cells. In terms of tissue distribution, expressed in the olfactory bulb and olfactory sensory neurons (at protein level). Expressed in B cells (at protein level). Expressed in T lymphocytes. As to expression, expressed in hematopoietic cells from spleen, lymph node and thymus (at protein level). Expressed weakly in the lung (at protein level). Expressed in the brain, lung, kidney, and weakly expressed in the liver and lung (at protein level).

It localises to the cytoplasm. Its subcellular location is the cell membrane. The protein localises to the cell projection. The protein resides in the axon. It is found in the ruffle membrane. In terms of biological role, acts as an adapter protein that mediates cell signaling pathways involved in cellular functions such as cell adhesion and migration, tissue organization, and the regulation of the immune response. Plays a role in integrin-mediated cell adhesion through BCAR1-CRK-RAPGEF1 signaling and activation of the small GTPase RAP1. Promotes cell migration and invasion through the extracellular matrix. Required for marginal zone B-cell development and thymus-independent type 2 immune responses. Mediates migration and adhesion of B cells in the splenic marginal zone via promoting hyperphosphorylation of NEDD9/CASL. Plays a role in CXCL13-induced chemotaxis of B-cells. Plays a role in the migration of olfactory sensory neurons (OSNs) into the forebrain and the innervation of the olfactory bulb by the OSN axons during development. Required for the efficient tyrosine phosphorylation of BCAR1 in OSN axons. Important regulator of chemokine-induced, integrin-mediated T lymphocyte adhesion and migration, acting upstream of RAP1. Required for tissue-specific adhesion of T lymphocytes to peripheral tissues. Required for basal and CXCL2 stimulated serine-threonine phosphorylation of NEDD9. May be involved in the regulation of T-cell receptor-mediated IL2 production through the activation of the JNK pathway in T-cells. Functionally, may be involved in the BCAR1/CAS-mediated JNK activation pathway. In Mus musculus (Mouse), this protein is SH2 domain-containing protein 3C (Sh2d3c).